Consider the following 368-residue polypeptide: Histidinol-phosphate aminotransferase (368 aa).

Residue Lys-228 is modified to N6-(pyridoxal phosphate)lysine.

The protein belongs to the class-II pyridoxal-phosphate-dependent aminotransferase family. Histidinol-phosphate aminotransferase subfamily. As to quaternary structure, homodimer. The cofactor is pyridoxal 5'-phosphate.

It carries out the reaction L-histidinol phosphate + 2-oxoglutarate = 3-(imidazol-4-yl)-2-oxopropyl phosphate + L-glutamate. The protein operates within amino-acid biosynthesis; L-histidine biosynthesis; L-histidine from 5-phospho-alpha-D-ribose 1-diphosphate: step 7/9. This Methylobacillus flagellatus protein is Histidinol-phosphate aminotransferase (hisC).